The following is a 1179-amino-acid chain: Tubulin glycylase 3B (1179 aa).

Over residues 177 to 199 (NKGQTNNSNRENGGNFHSEQSPK) the composition is skewed to polar residues. Disordered stretches follow at residues 177–208 (NKGQTNNSNRENGGNFHSEQSPKSAAGSVVSG), 250–278 (QQPQPLSQQHSNQSSQSSNPQSQSPLPLS), 592–625 (KVLSNTKSKDEEESSDDDETPVKSKSNNQNAVQQ), and 853–890 (QKQHMNKRKNSHRISVNHNHNDPIEEESAQSSTSLKQD). A compositionally biased stretch (basic and acidic residues) spans 592-601 (KVLSNTKSKD). 2 stretches are compositionally biased toward polar residues: residues 614–625 (KSKSNNQNAVQQ) and 881–890 (AQSSTSLKQD). Residues 790–1152 (FIDFYETVDF…SMAKKGTKKN (363 aa)) form the TTL domain. ATP is bound by residues 965 to 968 (QKYI), Lys978, and Asp980.

The protein resides in the cell projection. It is found in the cilium. The protein localises to the cytoplasm. It localises to the cytoskeleton. Its subcellular location is the cilium axoneme. Its function is as follows. Polyglycylase which modifies tubulin, generating side chains of glycine on the gamma-carboxyl groups of specific glutamate residues within the C-terminal tail of tubulin. Polyglycylates tubulin, with a preference for alpha-tubulin toward beta-tubulin. This Tetrahymena thermophila (strain SB210) protein is Tubulin glycylase 3B (TTLL3B).